A 621-amino-acid chain; its full sequence is Protein Tra (621 aa).

A helical membrane pass occupies residues 126–146 (GAWPVAGSLALIAANVAALVI). Positions 275–465 (GEPVQVPLGR…LALSTSGESR (191 aa)) constitute a FtsK domain. 290-297 (GTSGSGKS) contacts ATP. The helical transmembrane segment at 564–584 (VAAAIGTGATTVADVATVTGI) threads the bilayer.

Its subcellular location is the cell membrane. In terms of biological role, major protein required for plasmid transfer. This Streptomyces lividans protein is Protein Tra (tra).